Reading from the N-terminus, the 891-residue chain is Targeting protein for Xklp2 homolog (891 aa).

A compositionally biased stretch (basic and acidic residues) spans 42-54; that stretch reads HENGVPLTFDDKA. Disordered stretches follow at residues 42 to 310, 418 to 454, 472 to 518, 723 to 746, and 789 to 891; these read HENG…KSCP, NLRK…SFSG, HTKT…NRHR, CSGV…AEKG, and STKP…SHTS. Over residues 108–124 the composition is skewed to polar residues; that stretch reads DDVSSAESETCEMSTDS. A compositionally biased stretch (acidic residues) spans 141-154; sequence DDEATVQESSDAEE. Positions 155–173 are enriched in polar residues; the sequence is TQTLPSSCVDSSTAEMSTD. Residues 236–246 show a composition bias toward basic residues; it reads PTRKSPRLHSR. Over residues 442 to 454 the composition is skewed to basic and acidic residues; that stretch reads DNRKRTHEESFSG. Residues 791 to 802 are compositionally biased toward polar residues; it reads KPMTDISNFSLN. Basic and acidic residues-rich tracts occupy residues 803–822 and 831–852; these read TERR…ERQL and REAE…DSIH.

Belongs to the TPX2 family. In terms of tissue distribution, detectable in immature oocytes.

Its subcellular location is the nucleus. It localises to the cytoplasm. It is found in the cytoskeleton. The protein resides in the spindle. Spindle assembly factor. Required for normal assembly of mitotic spindles. The chain is Targeting protein for Xklp2 homolog from Patiria pectinifera (Starfish).